A 123-amino-acid chain; its full sequence is Cytochrome b-c1 complex subunit 7 (123 aa).

Belongs to the UQCRB/QCR7 family. Component of the ubiquinol-cytochrome c oxidoreductase (cytochrome b-c1 complex, complex III, CIII), a multisubunit enzyme composed of 3 respiratory subunits cytochrome b, cytochrome c1 and Rieske protein, 2 core protein subunits, and additional low-molecular weight protein subunits. The complex exists as an obligatory dimer and forms supercomplexes (SCs) in the inner mitochondrial membrane with cytochrome c oxidase (complex IV, CIV). In terms of processing, the N-terminus is blocked.

It localises to the mitochondrion inner membrane. Its function is as follows. Component of the ubiquinol-cytochrome c oxidoreductase, a multisubunit transmembrane complex that is part of the mitochondrial electron transport chain which drives oxidative phosphorylation. The respiratory chain contains 3 multisubunit complexes succinate dehydrogenase (complex II, CII), ubiquinol-cytochrome c oxidoreductase (cytochrome b-c1 complex, complex III, CIII) and cytochrome c oxidase (complex IV, CIV), that cooperate to transfer electrons derived from NADH and succinate to molecular oxygen, creating an electrochemical gradient over the inner membrane that drives transmembrane transport and the ATP synthase. The cytochrome b-c1 complex catalyzes electron transfer from ubiquinol to cytochrome c, linking this redox reaction to translocation of protons across the mitochondrial inner membrane, with protons being carried across the membrane as hydrogens on the quinol. In the process called Q cycle, 2 protons are consumed from the matrix, 4 protons are released into the intermembrane space and 2 electrons are passed to cytochrome c. This chain is Cytochrome b-c1 complex subunit 7, found in Solanum tuberosum (Potato).